A 298-amino-acid polypeptide reads, in one-letter code: Lipoyl synthase (298 aa).

7 residues coordinate [4Fe-4S] cluster: cysteine 43, cysteine 48, cysteine 54, cysteine 69, cysteine 73, cysteine 76, and serine 280. The region spanning 55-269 (FSSGTATFLI…AACGRGMGIP (215 aa)) is the Radical SAM core domain.

This sequence belongs to the radical SAM superfamily. Lipoyl synthase family. [4Fe-4S] cluster is required as a cofactor.

The protein resides in the cytoplasm. The enzyme catalyses [[Fe-S] cluster scaffold protein carrying a second [4Fe-4S](2+) cluster] + N(6)-octanoyl-L-lysyl-[protein] + 2 oxidized [2Fe-2S]-[ferredoxin] + 2 S-adenosyl-L-methionine + 4 H(+) = [[Fe-S] cluster scaffold protein] + N(6)-[(R)-dihydrolipoyl]-L-lysyl-[protein] + 4 Fe(3+) + 2 hydrogen sulfide + 2 5'-deoxyadenosine + 2 L-methionine + 2 reduced [2Fe-2S]-[ferredoxin]. Its pathway is protein modification; protein lipoylation via endogenous pathway; protein N(6)-(lipoyl)lysine from octanoyl-[acyl-carrier-protein]: step 2/2. Its function is as follows. Catalyzes the radical-mediated insertion of two sulfur atoms into the C-6 and C-8 positions of the octanoyl moiety bound to the lipoyl domains of lipoate-dependent enzymes, thereby converting the octanoylated domains into lipoylated derivatives. The protein is Lipoyl synthase of Nitratidesulfovibrio vulgaris (strain ATCC 29579 / DSM 644 / CCUG 34227 / NCIMB 8303 / VKM B-1760 / Hildenborough) (Desulfovibrio vulgaris).